The following is a 323-amino-acid chain: Transcription factor MafB (323 aa).

Lys32 participates in a covalent cross-link: Glycyl lysine isopeptide (Lys-Gly) (interchain with G-Cter in SUMO). Over residues 34 to 43 (EPLGRAERPG) the composition is skewed to basic and acidic residues. Disordered stretches follow at residues 34 to 78 (EPLG…PTEQ) and 116 to 210 (PVPQ…VEDR). Low complexity predominate over residues 54 to 76 (SLSSTPLSTPCSSVPSSPSFSPT). 2 stretches are compositionally biased toward basic residues: residues 129–143 (GAHH…HPHH) and 159–168 (AHPHHHHHHQ). Positions 192–201 (PHATASATAA) are enriched in low complexity. Residues 238 to 263 (RLKQKRRTLKNRGYAQSCRYKRVQQK) form a basic motif region. A bZIP domain is found at 238 to 301 (RLKQKRRTLK…DAHKVKCEKL (64 aa)). The segment at 266-287 (LENEKTQLIQQVEQLKQEVSRL) is leucine-zipper. A Glycyl lysine isopeptide (Lys-Gly) (interchain with G-Cter in SUMO) cross-link involves residue Lys297.

The protein belongs to the bZIP family. Maf subfamily. As to quaternary structure, homodimer or heterodimer with other bHLH-Zip transcription factors. Binds DNA as a homodimer or a heterodimer. Forms homodimers and heterodimers with FOS, FOSB and FOSL2, but not with JUN proteins (JUN, JUNB and JUND). Interacts with PAX6; the interaction is direct. Interacts with ETS1 and LRP1. Interacts with the intracellular cytoplasmic domain of LRP1 (LRPICD); the interaction results in a moderate reduction of MAFB transcriptional potential. Post-translationally, sumoylated. Sumoylation on Lys-32 and Lys-297 stimulates its transcriptional repression activity and promotes macrophage differentiation from myeloid progenitors.

It localises to the nucleus. Functionally, acts as a transcriptional activator or repressor. Plays a pivotal role in regulating lineage-specific hematopoiesis by repressing ETS1-mediated transcription of erythroid-specific genes in myeloid cells. Required for monocytic, macrophage, osteoclast, podocyte and islet beta cell differentiation. Involved in renal tubule survival and F4/80 maturation. Activates the insulin and glucagon promoters. Together with PAX6, transactivates weakly the glucagon gene promoter through the G1 element. SUMO modification controls its transcriptional activity and ability to specify macrophage fate. Binds element G1 on the glucagon promoter. Involved either as an oncogene or as a tumor suppressor, depending on the cell context. Required for the transcriptional activation of HOXB3 in the rhombomere r5 in the hindbrain. This is Transcription factor MafB (MAFB) from Macaca fascicularis (Crab-eating macaque).